Reading from the N-terminus, the 345-residue chain is Anthranilate phosphoribosyltransferase (345 aa).

5-phospho-alpha-D-ribose 1-diphosphate-binding positions include Gly79, 82-83 (GD), Thr87, 89-92 (NVST), 106-114 (KHGNRAVSG), and Ser118. Anthranilate is bound at residue Gly79. Mg(2+) is bound at residue Ser91. Position 109 (Asn109) interacts with anthranilate. Position 164 (Arg164) interacts with anthranilate. Mg(2+) is bound by residues Asp223 and Glu224.

Belongs to the anthranilate phosphoribosyltransferase family. Homodimer. Mg(2+) is required as a cofactor.

It carries out the reaction N-(5-phospho-beta-D-ribosyl)anthranilate + diphosphate = 5-phospho-alpha-D-ribose 1-diphosphate + anthranilate. The protein operates within amino-acid biosynthesis; L-tryptophan biosynthesis; L-tryptophan from chorismate: step 2/5. Its function is as follows. Catalyzes the transfer of the phosphoribosyl group of 5-phosphorylribose-1-pyrophosphate (PRPP) to anthranilate to yield N-(5'-phosphoribosyl)-anthranilate (PRA). The polypeptide is Anthranilate phosphoribosyltransferase (Saccharolobus islandicus (strain M.14.25 / Kamchatka #1) (Sulfolobus islandicus)).